We begin with the raw amino-acid sequence, 3046 residues long: Nucleosome-remodeling factor subunit BPTF (3046 aa).

The tract at residues 1-232 (MRGRRGRPPK…DIPPLEFPKS (232 aa)) is disordered. Residues 22-33 (PAPPPPPPPPTS) are compositionally biased toward pro residues. Over residues 62-72 (TRLSSPRGGSS) the composition is skewed to low complexity. Residues 78–87 (PPPPPAPPST) are compositionally biased toward pro residues. Gly residues predominate over residues 91–110 (GRGGRGGGGGRTGGGGGGGH). A compositionally biased stretch (acidic residues) spans 129–186 (HESEEEEEEEDMVSEEEEEEDGDAEETQDSEDDEEDEMEEDDDDSDYPEEMEDDDDDA). The segment covering 190–203 (TESSFRSHSTYSST) has biased composition (low complexity). Residues 205 to 215 (GRRKPRVHRPR) are compositionally biased toward basic residues. Serine 216 is subject to Phosphoserine. The DDT domain occupies 240–300 (NEHIMNVIAI…LKAVLREEDT (61 aa)). Residues 390 to 437 (DDHCRVCHKLGDLLCCETCSAVYHLECVKPPLEEVPEDEWQCEVCVAH) form a PHD-type 1 zinc finger. 2 stretches are compositionally biased toward basic and acidic residues: residues 567 to 609 (IDNV…SDDK) and 616 to 628 (EQGK…EVGD). Residues 567 to 774 (IDNVKSPEET…GAGKGASGST (208 aa)) form a disordered region. Phosphoserine is present on serine 572. Residues 574-604 (EETEKDKNETENDSKDAEKNREEFEDQSLEK) adopt a coiled-coil conformation. Polar residues-rich tracts occupy residues 631–653 (NSVS…SPSE) and 690–705 (TCES…SIQP). Residues 640–749 (NTTNATSEET…PVSIQEEIVG (110 aa)) are interaction with KEAP1. Over residues 706 to 723 (NLENSNSSSELNSSQSES) the composition is skewed to low complexity. A compositionally biased stretch (basic and acidic residues) spans 725–738 (KAADDPENGERESH). 2 positions are modified to phosphoserine: serine 763 and serine 817. Positions 839 to 921 (YFKLGQEGKY…QLENNIPSSF (83 aa)) are interaction with MAZ. Lysine 880 carries the post-translational modification N6-acetyllysine. Residues 978 to 1007 (MTSIEREEKEKVKKKEKKQEEEETMQQATW) are a coiled coil. The disordered stretch occupies residues 1057–1157 (YRKSLEGTKN…MKTESHVNCQ (101 aa)). At threonine 1064 the chain carries Phosphothreonine. Basic and acidic residues-rich tracts occupy residues 1087–1102 (IKIE…KGSD) and 1113–1152 (DISK…KTES). Glycyl lysine isopeptide (Lys-Gly) (interchain with G-Cter in SUMO2) cross-links involve residues lysine 1088, lysine 1138, and lysine 1209. 4 disordered regions span residues 1215–1339 (KGIG…GNDF), 1371–1448 (IVSS…FRTR), 1465–1537 (GEST…NGKD), and 1605–1706 (NSSE…GESK). 3 stretches are compositionally biased toward polar residues: residues 1220-1232 (TSTN…SESP), 1242-1257 (QSDS…ANND), and 1266-1285 (CSES…TTNK). At serine 1231 the chain carries Phosphoserine. Positions 1287–1305 (YPKDRVLDDVSIRSPETKC) are enriched in basic and acidic residues. At serine 1300 the chain carries Phosphoserine. Threonine 1303 bears the Phosphothreonine mark. Residue serine 1310 is modified to Phosphoserine. The segment covering 1372–1386 (VSSSKSALHSSVPKS) has biased composition (low complexity). 2 stretches are compositionally biased toward polar residues: residues 1409–1426 (SESN…SIQD) and 1434–1444 (VQNSNESISEQ). A compositionally biased stretch (basic and acidic residues) spans 1491-1525 (KKLEERPVNKCSDQIKLKNTTDKKNNENRESEKKG). Residues 1629–1656 (TLPSTKESDSTQTTTPSASCPESNSVNQ) show a composition bias toward polar residues. Lysine 1730 participates in a covalent cross-link: Glycyl lysine isopeptide (Lys-Gly) (interchain with G-Cter in SUMO2). Disordered stretches follow at residues 1973-2003 (VPET…TPKQ) and 2041-2070 (QAKK…STIS). A coiled-coil region spans residues 2022–2050 (EIRAFAERVEKEKAQAVEQQAKKRLEQQK). Over residues 2054–2070 (IATSTTSPTSSTTSTIS) the composition is skewed to low complexity. Serine 2098 is modified (phosphoserine). Arginine 2155 carries the omega-N-methylarginine modification. Residues 2160 to 2180 (TIRPNTSGSGGTTSNSQVITG) form a disordered region. Asymmetric dimethylarginine occurs at positions 2162, 2184, and 2191. The segment covering 2232-2256 (VSAPNTVSSTPGQKSLTSATSTSNI) has biased composition (polar residues). Disordered regions lie at residues 2232–2270 (VSAP…QQGQ), 2346–2549 (TAST…RPQL), 2714–2733 (QAAK…SKQN), and 2795–2858 (PCPP…ISTT). 2 stretches are compositionally biased toward low complexity: residues 2257–2270 (QSSA…QQGQ) and 2346–2362 (TAST…AGTG). Positions 2363–2375 (EQRQSKLSPQMQV) are enriched in polar residues. Residues 2391–2431 (PAEAQPQTAQPSAQPQPQTQPQSPAQPEVQTQPEVQTQTTV) show a composition bias toward low complexity. Positions 2432 to 2485 (SSHVPSEAQPTHAQSSKPQVAAQSQPQSNVQGQSPVRVQSPSQTRIRPSTPSQL) are enriched in polar residues. Serine 2465 bears the Phosphoserine mark. Low complexity predominate over residues 2486–2538 (SPGQQSQVQTTTSQPIPIQPHTSLQIPSQGQPQSQPQVQSSTQTLSSGQTLNQ). Positions 2706–2732 (DKIDKEEKQAAKKRKREESVEQKRSKQ) form a coiled coil. Basic and acidic residues predominate over residues 2714–2729 (QAAKKRKREESVEQKR). Over residues 2795–2818 (PCPPVTPAPPAPPAPPPSPPPPPA) the composition is skewed to pro residues. Residues 2838–2847 (KREEEKDSSS) are compositionally biased toward basic and acidic residues. The PHD-type 2 zinc-finger motif lies at 2867–2918 (KLYCICKTPYDESKFYIGCDRCQNWYHGRCVGILQSEAELIDEYVCPQCQST). Positions 2927–3031 (PLTEKDYEGL…SFFVQKLKGF (105 aa)) constitute a Bromo domain.

The protein belongs to the PBTF family. As to quaternary structure, interacts with MAZ. Interacts with KEAP1. Component of the NURF-1 ISWI chromatin remodeling complex (also called the nucleosome-remodeling factor (NURF) complex) at least composed of SMARCA1 (isoform 2), BPTF, RBBP4 and RBBP7. Within the complex interacts with isoform 2 of SMARCA1. Component of the BPFT-SMARCA1 complex at least composed of SMARCA1 (isoform 1), BPFT, RBBP4 and RBBP7; the complex is catalytically inactive and does not remodel chromatin. Within the complex interacts with isoform 1 of SMARCA1. Component of the NURF-5 ISWI chromatin remodeling complex at least composed of SMARCA5/SNF2H and BPTF. Within NURF-5 ISWI chromatin remodeling complex interacts with SMARCA5/SNF2H. Phosphorylation enhances DNA-binding. Post-translationally, highly susceptible to proteolysis. As to expression, ubiquitously expressed, with highest levels in testis. Present in kidney, liver and brain. In the brain, highest levels are found in motor cortex (at protein level).

The protein resides in the cytoplasm. It is found in the nucleus. In terms of biological role, regulatory subunit of the ATP-dependent NURF-1 and NURF-5 ISWI chromatin remodeling complexes, which form ordered nucleosome arrays on chromatin and facilitate access to DNA during DNA-templated processes such as DNA replication, transcription, and repair. The NURF-1 ISWI chromatin remodeling complex has a lower ATP hydrolysis rate than the NURF-5 ISWI chromatin remodeling complex. Within the NURF-1 ISWI chromatin-remodeling complex, binds to the promoters of En1 and En2 to positively regulate their expression and promote brain development. Histone-binding protein which binds to H3 tails trimethylated on 'Lys-4' (H3K4me3), which mark transcription start sites of active genes. Binds to histone H3 tails dimethylated on 'Lys-4' (H3K4Me2) to a lesser extent. May also regulate transcription through direct binding to DNA or transcription factors. In Homo sapiens (Human), this protein is Nucleosome-remodeling factor subunit BPTF (BPTF).